The chain runs to 969 residues: RNA polymerase-associated protein RapA (969 aa).

The Helicase ATP-binding domain maps to 164-334 (EVGRRHAPRV…FARLRLLDPD (171 aa)). 177 to 184 (DEVGLGKT) is an ATP binding site. The DEAH box signature appears at 280–283 (DEAH). Residues 492–679 (RVNWLIEKIQ…ESAKLNQSLK (188 aa)) form the Helicase C-terminal domain.

This sequence belongs to the SNF2/RAD54 helicase family. RapA subfamily. In terms of assembly, interacts with the RNAP. Has a higher affinity for the core RNAP than for the holoenzyme. Its ATPase activity is stimulated by binding to RNAP.

In terms of biological role, transcription regulator that activates transcription by stimulating RNA polymerase (RNAP) recycling in case of stress conditions such as supercoiled DNA or high salt concentrations. Probably acts by releasing the RNAP, when it is trapped or immobilized on tightly supercoiled DNA. Does not activate transcription on linear DNA. Probably not involved in DNA repair. This chain is RNA polymerase-associated protein RapA, found in Vibrio atlanticus (strain LGP32) (Vibrio splendidus (strain Mel32)).